A 90-amino-acid chain; its full sequence is ATP synthase subunit c (90 aa).

Helical transmembrane passes span 17–37 (PLAYGLTMVAAGLAIMGAGVV) and 70–90 (LAIVETASIYCFIIALLIIFV).

It belongs to the ATPase C chain family. As to quaternary structure, F-type ATPases have 2 components, F(1) - the catalytic core - and F(0) - the membrane proton channel. F(1) has five subunits: alpha(3), beta(3), gamma(1), delta(1), epsilon(1). F(0) has three main subunits: a(1), b(2) and c(10-14). The alpha and beta chains form an alternating ring which encloses part of the gamma chain. F(1) is attached to F(0) by a central stalk formed by the gamma and epsilon chains, while a peripheral stalk is formed by the delta and b chains.

Its subcellular location is the cell membrane. In terms of biological role, f(1)F(0) ATP synthase produces ATP from ADP in the presence of a proton or sodium gradient. F-type ATPases consist of two structural domains, F(1) containing the extramembraneous catalytic core and F(0) containing the membrane proton channel, linked together by a central stalk and a peripheral stalk. During catalysis, ATP synthesis in the catalytic domain of F(1) is coupled via a rotary mechanism of the central stalk subunits to proton translocation. Key component of the F(0) channel; it plays a direct role in translocation across the membrane. A homomeric c-ring of between 10-14 subunits forms the central stalk rotor element with the F(1) delta and epsilon subunits. The protein is ATP synthase subunit c of Metamycoplasma arthritidis (strain 158L3-1) (Mycoplasma arthritidis).